The chain runs to 1160 residues: AF4/FMR2 family member 4 (1160 aa).

Positions 1–19 (MNREDRNVLRMKERERRNQ) are enriched in basic and acidic residues. 4 disordered regions span residues 1 to 42 (MNRE…YKVT), 78 to 289 (PKPA…SKAH), 322 to 908 (WPPP…FDDR), and 1031 to 1070 (NSYS…SSGG). Over residues 115–128 (PSTSQSQKRSSALQ) the composition is skewed to polar residues. The residue at position 120 (serine 120) is a Phosphoserine. Over residues 172-189 (RSSSPGKPQAVSSLSSSH) the composition is skewed to low complexity. Residues 193-212 (HGNDHHSKEHQRSKSPRDPD) show a composition bias toward basic and acidic residues. Serine 207 carries the phosphoserine modification. Positions 229 to 247 (SSQSFPPSLMSKSSSMLQK) are enriched in low complexity. 2 stretches are compositionally biased toward polar residues: residues 268–280 (EHYS…NSMT) and 360–370 (YSTAKTSNGHQ). Phosphoserine occurs at positions 382, 383, 384, and 387. Residues 398-407 (PRSTPGSNSE) are compositionally biased toward polar residues. The span at 408–424 (PSHHNSEGADNSRDDSS) shows a compositional bias: basic and acidic residues. Residues 425-457 (SHSGSESSSGSDSESESSSSDSEANEPSQSASP) are compositionally biased toward low complexity. Phosphoserine occurs at positions 482, 485, and 486. 3 stretches are compositionally biased toward polar residues: residues 483–496 (PASS…SSQA), 505–523 (GTAS…SSAT), and 544–555 (SPAQSDSTTQRR). Position 544 is a phosphoserine (serine 544). Over residues 563–581 (KKPEKSAAEEPRGGLKIES) the composition is skewed to basic and acidic residues. Lysine 578 participates in a covalent cross-link: Glycyl lysine isopeptide (Lys-Gly) (interchain with G-Cter in SUMO2). A compositionally biased stretch (basic residues) spans 594-607 (SRHKAATKGSRKPN). The segment covering 608 to 622 (IKKESKSSPRPTAEK) has biased composition (basic and acidic residues). The segment covering 641 to 657 (TDTSSSDSDGSESLPPS) has biased composition (low complexity). Serine 666 bears the Phosphoserine mark. Threonine 669 is modified (phosphothreonine). A phosphoserine mark is found at serine 675, serine 689, serine 698, and serine 701. At tyrosine 707 the chain carries Phosphotyrosine. Basic and acidic residues-rich tracts occupy residues 725–756 (PYKE…EKAS), 764–784 (KNDD…DKNS), and 794–806 (ESSK…EKDL). Serine 809 is subject to Phosphoserine. An N6-acetyllysine modification is found at lysine 817. Serine 831 is subject to Phosphoserine. Low complexity-rich tracts occupy residues 831–859 (SQSS…SSTA) and 880–895 (PNSS…TSES). 4 positions are modified to phosphoserine: serine 1040, serine 1052, serine 1055, and serine 1059. The span at 1059–1070 (SPGNSGSYSSGG) shows a compositional bias: low complexity.

The protein belongs to the AF4 family. Component of the super elongation complex (SEC), at least composed of EAF1, EAF2, CDK9, MLLT3/AF9, AFF (AFF1 or AFF4), the P-TEFb complex and ELL (ELL, ELL2 or ELL3). Interacts with ELL2; the interaction is direct and leads to stabilize ELL2 and prevent ELL2 ubiquitination and degradation. Interacts with ELL3; the interaction is direct. Dephosphorylated at Ser-544 by the PNUTS-PP1 complex, promoting RNA polymerase II transcription pause-release. Highly expressed in testis by Sertoli cells, and at low levels in other tissues.

The protein localises to the nucleus. The protein resides in the chromosome. Functionally, key component of the super elongation complex (SEC), a complex required to increase the catalytic rate of RNA polymerase II transcription by suppressing transient pausing by the polymerase at multiple sites along the DNA. In the SEC complex, AFF4 acts as a central scaffold that recruits other factors through direct interactions with ELL proteins (ELL, ELL2 or ELL3) and the P-TEFb complex. This chain is AF4/FMR2 family member 4 (Aff4), found in Mus musculus (Mouse).